We begin with the raw amino-acid sequence, 159 residues long: Nucleotide-binding protein Pmen_0939 (159 aa).

This sequence belongs to the YajQ family.

Its function is as follows. Nucleotide-binding protein. This Ectopseudomonas mendocina (strain ymp) (Pseudomonas mendocina) protein is Nucleotide-binding protein Pmen_0939.